The sequence spans 102 residues: MDKKVCVSILLAMLAIAALCRPMTELESARHGAQRKNSISDVSRRDLLASLTHEQKQLIMSQLLPELLSELSNAEDHLHPMRDRDYAGWMDFGRRSSEVTES.

An N-terminal signal peptide occupies residues Met-1–Cys-20. Residues Arg-21–Arg-45 constitute a propeptide that is removed on maturation. At Tyr-86 the chain carries Sulfotyrosine. Phe-92 is modified (phenylalanine amide). The propeptide occupies Ser-96–Ser-102.

This sequence belongs to the gastrin/cholecystokinin family. In terms of tissue distribution, expressed in antrum, duodenum, colon, pancreas, brain and testis. No expression found in kidney, lung, liver, skin or distal two-thirds of small intestine. In the brain, strongly expressed in the pituitary gland with moderate expression in the neural lobe, brain stem and hypothalamus.

Its subcellular location is the secreted. In terms of biological role, may control digestion processes. The protein is Gastrin/cholecystokinin-like peptide (GAST) of Aquarana catesbeiana (American bullfrog).